The following is a 219-amino-acid chain: Large ribosomal subunit protein uL3 (219 aa).

Disordered stretches follow at residues Asp-62–Gly-81 and Gln-136–Met-156.

The protein belongs to the universal ribosomal protein uL3 family. As to quaternary structure, part of the 50S ribosomal subunit. Forms a cluster with proteins L14 and L19.

One of the primary rRNA binding proteins, it binds directly near the 3'-end of the 23S rRNA, where it nucleates assembly of the 50S subunit. The sequence is that of Large ribosomal subunit protein uL3 from Staphylococcus saprophyticus subsp. saprophyticus (strain ATCC 15305 / DSM 20229 / NCIMB 8711 / NCTC 7292 / S-41).